Reading from the N-terminus, the 476-residue chain is Chromosomal replication initiator protein DnaA (476 aa).

Positions 1 to 87 are domain I, interacts with DnaA modulators; the sequence is MSDRSDPTHA…AGVSNFAIVV (87 aa). The segment at 87–131 is domain II; the sequence is VNPGIAQDAFAQHPEPAEQPYIETPTITAPTDNPGLPASPSRGDS. Residues 132–348 are domain III, AAA+ region; sequence RLNPKYGFDT…GTLIRVTAFA (217 aa). Residues G176, G178, K179, and T180 each coordinate ATP. The interval 349-476 is domain IV, binds dsDNA; it reads SLNKTPVDLA…IKQNHRYGKM (128 aa).

The protein belongs to the DnaA family. As to quaternary structure, oligomerizes as a right-handed, spiral filament on DNA at oriC.

Its subcellular location is the cytoplasm. Its function is as follows. Plays an essential role in the initiation and regulation of chromosomal replication. ATP-DnaA binds to the origin of replication (oriC) to initiate formation of the DNA replication initiation complex once per cell cycle. Binds the DnaA box (a 9 base pair repeat at the origin) and separates the double-stranded (ds)DNA. Forms a right-handed helical filament on oriC DNA; dsDNA binds to the exterior of the filament while single-stranded (ss)DNA is stabiized in the filament's interior. The ATP-DnaA-oriC complex binds and stabilizes one strand of the AT-rich DNA unwinding element (DUE), permitting loading of DNA polymerase. After initiation quickly degrades to an ADP-DnaA complex that is not apt for DNA replication. Binds acidic phospholipids. The protein is Chromosomal replication initiator protein DnaA of Clavibacter sepedonicus (Clavibacter michiganensis subsp. sepedonicus).